A 129-amino-acid polypeptide reads, in one-letter code: Follitropin subunit beta (129 aa).

An N-terminal signal peptide occupies residues 1 to 20; it reads MKSVQFCFLFCCWRAICCRS. Intrachain disulfides connect cysteine 21/cysteine 69, cysteine 35/cysteine 84, cysteine 38/cysteine 122, cysteine 46/cysteine 100, cysteine 50/cysteine 102, and cysteine 105/cysteine 112. Asparagine 25 and asparagine 42 each carry an N-linked (GlcNAc...) asparagine glycan.

It belongs to the glycoprotein hormones subunit beta family. In terms of assembly, heterodimer. The active follitropin is a heterodimer composed of an alpha chain/CGA shared with other hormones and a unique beta chain/FSHB shown here.

Its subcellular location is the secreted. Together with the alpha chain CGA constitutes follitropin, the follicle-stimulating hormone, and provides its biological specificity to the hormone heterodimer. Binds FSHR, a G protein-coupled receptor, on target cells to activate downstream signaling pathways. Follitropin is involved in follicle development and spermatogenesis in reproductive organs. The protein is Follitropin subunit beta (FSHB) of Bos taurus (Bovine).